Reading from the N-terminus, the 526-residue chain is 1,4-beta-D-glucan cellobiohydrolase B (526 aa).

Residues 1–23 (MASSFQLYKALLFFSSLLSAVQA) form the signal peptide. A catalytic region spans residues 24-458 (QKVGTQQAEV…SNIKFGPIGS (435 aa)). Catalysis depends on E235, which acts as the Nucleophile. E240 acts as the Proton donor in catalysis. N-linked (GlcNAc...) asparagine glycans are attached at residues N293 and N400. The tract at residues 459–490 (TFGNGGGSGPTTTVTTSTATSTTSSATSTATG) is ser/Thr-rich linker. Residues 464–488 (GGSGPTTTVTTSTATSTTSSATSTA) are disordered. The span at 468–488 (PTTTVTTSTATSTTSSATSTA) shows a compositional bias: low complexity. The CBM1 domain occupies 490–526 (GQAQHWEQCGGNGWTGPTVCASPWACTVVNSWYSQCL). Disulfide bonds link C498–C515 and C509–C525.

It belongs to the glycosyl hydrolase 7 (cellulase C) family.

It localises to the secreted. It catalyses the reaction Hydrolysis of (1-&gt;4)-beta-D-glucosidic linkages in cellulose and cellotetraose, releasing cellobiose from the non-reducing ends of the chains.. The biological conversion of cellulose to glucose generally requires three types of hydrolytic enzymes: (1) Endoglucanases which cut internal beta-1,4-glucosidic bonds; (2) Exocellobiohydrolases that cut the disaccharide cellobiose from the non-reducing end of the cellulose polymer chain; (3) Beta-1,4-glucosidases which hydrolyze the cellobiose and other short cello-oligosaccharides to glucose. This is 1,4-beta-D-glucan cellobiohydrolase B (cbhB) from Emericella nidulans (strain FGSC A4 / ATCC 38163 / CBS 112.46 / NRRL 194 / M139) (Aspergillus nidulans).